The following is a 314-amino-acid chain: MFDGIMPLIGSLLLVICVMVGVAFLTLLERKVLGYIQIRKGPNKVGFNGLLQPFSDAVKLFTKEQTYPLLSNYISYYFSPVFSLFLSLLIWMCIPYLIKLYSFNLGVLFFLCCTSLGVYTVMIAGWSSNSNYALLGGLRAVAQTISYEVSLALILLSFIFLVGNYNFLSFYFYQDYVWFIFFCFPLGLVWLASCLAETNRTPFDFAEGESELVSGFNVEYSSGGFALIFLAEYSSILFMSMLFVVIFLGSDIYSFMFFLKLSFISFIFIWVRGTLPRFRYDKLMYLAWKSFLPLSLNYLFFFVGLKIFFISLLF.

8 helical membrane passes run Ile-5–Leu-25, Phe-78–Ile-98, Leu-105–Gly-125, Ala-152–Phe-172, Tyr-176–Ala-196, Leu-227–Phe-247, Asp-251–Val-271, and Leu-294–Phe-314.

It belongs to the complex I subunit 1 family.

It localises to the mitochondrion inner membrane. It carries out the reaction a ubiquinone + NADH + 5 H(+)(in) = a ubiquinol + NAD(+) + 4 H(+)(out). Core subunit of the mitochondrial membrane respiratory chain NADH dehydrogenase (Complex I) that is believed to belong to the minimal assembly required for catalysis. Complex I functions in the transfer of electrons from NADH to the respiratory chain. The immediate electron acceptor for the enzyme is believed to be ubiquinone. This chain is NADH-ubiquinone oxidoreductase chain 1 (mt:ND1), found in Anopheles gambiae (African malaria mosquito).